The sequence spans 383 residues: S-adenosylmethionine synthase (383 aa).

An ATP-binding site is contributed by histidine 15. A Mg(2+)-binding site is contributed by aspartate 17. K(+) is bound at residue glutamate 43. Residues glutamate 56 and glutamine 99 each coordinate L-methionine. Residues 99–109 (QSPDINQGVDR) are flexible loop. ATP is bound by residues 164 to 166 (DAK), 230 to 231 (RF), aspartate 239, 245 to 246 (RK), alanine 262, and lysine 266. Aspartate 239 provides a ligand contact to L-methionine. Residue lysine 270 coordinates L-methionine.

Belongs to the AdoMet synthase family. As to quaternary structure, homotetramer; dimer of dimers. Mg(2+) is required as a cofactor. K(+) serves as cofactor.

It localises to the cytoplasm. The catalysed reaction is L-methionine + ATP + H2O = S-adenosyl-L-methionine + phosphate + diphosphate. The protein operates within amino-acid biosynthesis; S-adenosyl-L-methionine biosynthesis; S-adenosyl-L-methionine from L-methionine: step 1/1. Functionally, catalyzes the formation of S-adenosylmethionine (AdoMet) from methionine and ATP. The overall synthetic reaction is composed of two sequential steps, AdoMet formation and the subsequent tripolyphosphate hydrolysis which occurs prior to release of AdoMet from the enzyme. In Actinobacillus pleuropneumoniae serotype 7 (strain AP76), this protein is S-adenosylmethionine synthase.